The chain runs to 153 residues: uncharacterized protein (153 aa).

A signal peptide spans 1–22 (MKMLKKGTAVLFVMIMAVMLVA). Residue cysteine 23 is the site of N-palmitoyl cysteine attachment. Residue cysteine 23 is the site of S-diacylglycerol cysteine attachment. The interval 117–153 (DMNKIPGMSSNGDTSKGISMEESAKMLESQGYKEVSK) is disordered. Over residues 124–133 (MSSNGDTSKG) the composition is skewed to polar residues.

It to E.coli YehR.

Its subcellular location is the cell membrane. This is an uncharacterized protein from Listeria monocytogenes serovar 1/2a (strain ATCC BAA-679 / EGD-e).